The primary structure comprises 149 residues: Calmodulin (149 aa).

At Ala2 the chain carries N-acetylalanine. EF-hand domains are found at residues Asp8–Asn43, Pro44–Asp79, Asp81–Lys116, and Leu117–Lys149. Asp21, Asp23, Asp25, Cys27, Glu32, Asp57, Asp59, Asn61, Thr63, Glu68, Asp94, Asp96, Asn98, and Glu105 together coordinate Ca(2+). Lys116 is modified (N6,N6,N6-trimethyllysine). Asp130, Asp132, Asp134, Gln136, and Glu141 together coordinate Ca(2+).

The protein belongs to the calmodulin family.

Its function is as follows. Calmodulin mediates the control of a large number of enzymes, ion channels and other proteins by Ca(2+). Among the enzymes to be stimulated by the calmodulin-Ca(2+) complex are a number of protein kinases and phosphatases. This is Calmodulin (CAM) from Malus domestica (Apple).